Here is a 105-residue protein sequence, read N- to C-terminus: U2-lycotoxin-Ls1c (105 aa).

An N-terminal signal peptide occupies residues methionine 1–serine 17. Residues phenylalanine 18–arginine 41 constitute a propeptide that is removed on maturation. 4 disulfides stabilise this stretch: cysteine 51–cysteine 67, cysteine 58–cysteine 97, cysteine 60–cysteine 83, and cysteine 69–cysteine 81.

The protein belongs to the neurotoxin 04 (omega-agtx) family. 01 (type I omega-agtx) subfamily. In terms of tissue distribution, expressed by the venom gland.

Its subcellular location is the secreted. Its function is as follows. Insecticidal to house crickets. It induces an excitatory slow-onset impact that leads to irreversible spastic paralysis. It also modifies human voltage-gated potassium channel Kv1.5/KCNA5. Most likely, it binds to the voltage-sensing domain of the channel, suggesting it does not block the pore but prevents its opening at physiological membrane potentials. The recombinant peptide binds to the channel in an irreversible manner and slows down the hKv1.5 current activation kinetics. It is not toxic to mice, when intracranially injected (at 0.5 ug/g mouse). The chain is U2-lycotoxin-Ls1c from Lycosa singoriensis (Wolf spider).